A 522-amino-acid polypeptide reads, in one-letter code: Sulfite reductase [NADPH] flavoprotein alpha-component (522 aa).

The 139-residue stretch at 60 to 198 folds into the Flavodoxin-like domain; it reads ITILFGSQTG…DTERWSSDAL (139 aa). The disordered stretch occupies residues 217–242; sequence TLRSHQDLRSHQEQSRNRARPYDKDN. Over residues 220–242 the composition is skewed to basic and acidic residues; sequence SHQDLRSHQEQSRNRARPYDKDN. Residues 241-399 form the FAD-binding FR-type domain; it reads DNPYTATLLE…VAPYRAFLQQ (159 aa).

Alpha(8)-beta(8). The alpha component is a flavoprotein, the beta component is a hemoprotein. It depends on FAD as a cofactor. FMN serves as cofactor.

The enzyme catalyses hydrogen sulfide + 3 NADP(+) + 3 H2O = sulfite + 3 NADPH + 4 H(+). Functionally, catalyzes the 6-electron reduction of sulfite to sulfide. This is one of several activities required for the biosynthesis of L-cysteine from sulfate. The flavo-protein component catalyzes the electron flow from NADPH -&gt; FAD -&gt; FMN to the hemoprotein component. This is Sulfite reductase [NADPH] flavoprotein alpha-component (cysJ) from Thiocapsa roseopersicina.